A 663-amino-acid chain; its full sequence is Chaperone protein HtpG (663 aa).

Residues 1–352 (MTKQTLSFQA…SADLPLNVSR (352 aa)) form an a; substrate-binding region. Over residues 218–228 (ELINPSDEKGG) the composition is skewed to basic and acidic residues. Positions 218-237 (ELINPSDEKGGRQPGGMVKT) are disordered. Positions 353–595 (ELLQESRDVK…DHGMSTQLAR (243 aa)) are b. Positions 596-663 (MLKQAGQAAP…YVKRVNALLV (68 aa)) are c.

This sequence belongs to the heat shock protein 90 family. As to quaternary structure, homodimer.

It is found in the cytoplasm. Its function is as follows. Molecular chaperone. Has ATPase activity. This is Chaperone protein HtpG from Albidiferax ferrireducens (strain ATCC BAA-621 / DSM 15236 / T118) (Rhodoferax ferrireducens).